Here is a 647-residue protein sequence, read N- to C-terminus: Nucleoside triphosphatase I (647 aa).

The region spanning F48–N212 is the Helicase ATP-binding domain. W61–T68 contacts ATP. Positions D150–H153 match the DEXH box motif. Residues Y378 to K541 enclose the Helicase C-terminal domain. The interval D467–I533 is binding to the cap-specific mRNA (nucleoside-2'-O-)-methyltransferase.

The protein belongs to the helicase family. NPH I subfamily. As to quaternary structure, monomer. Interacts (via C-terminus) with RAP94 (via N-terminus). Interacts with the cap-specific mRNA (nucleoside-2'-O-)-methyltransferase.

It is found in the virion. It catalyses the reaction a ribonucleoside 5'-triphosphate + H2O = a ribonucleoside 5'-diphosphate + phosphate + H(+). Its function is as follows. DNA-dependent ATPase required for providing the needed energy to achieve the termination of early transcripts. Acts in concert with the RAP94 subunit of the virion RNA polymerase and the capping enzyme/VTF to catalyze release of UUUUUNU-containing nascent RNA from the elongation complex. NPH-I must bind ssDNA in order to exhibit ATPase activity. The sequence is that of Nucleoside triphosphatase I (NPH1) from Choristoneura fumiferana (Spruce budworm moth).